The following is an 87-amino-acid chain: UPF0335 protein RL4065 (87 aa).

The protein belongs to the UPF0335 family.

This chain is UPF0335 protein RL4065, found in Rhizobium johnstonii (strain DSM 114642 / LMG 32736 / 3841) (Rhizobium leguminosarum bv. viciae).